The chain runs to 291 residues: UDP-N-acetylenolpyruvoylglucosamine reductase (291 aa).

The region spanning 22–187 (RIGGPARYFK…ASATFQLTKD (166 aa)) is the FAD-binding PCMH-type domain. Residue arginine 166 is part of the active site. The Proton donor role is filled by cysteine 214. Residue glutamate 283 is part of the active site.

It belongs to the MurB family. FAD is required as a cofactor.

The protein localises to the cytoplasm. It catalyses the reaction UDP-N-acetyl-alpha-D-muramate + NADP(+) = UDP-N-acetyl-3-O-(1-carboxyvinyl)-alpha-D-glucosamine + NADPH + H(+). It participates in cell wall biogenesis; peptidoglycan biosynthesis. In terms of biological role, cell wall formation. This is UDP-N-acetylenolpyruvoylglucosamine reductase from Chlamydia trachomatis serovar L2 (strain ATCC VR-902B / DSM 19102 / 434/Bu).